We begin with the raw amino-acid sequence, 153 residues long: Adenosine 5'-monophosphoramidase HINT3 (153 aa).

The 111-residue stretch at isoleucine 20–arginine 130 folds into the HIT domain. AMP contacts are provided by residues aspartate 46 to isoleucine 47 and histidine 115 to histidine 117. Positions histidine 113–histidine 117 match the Histidine triad motif motif. Catalysis depends on histidine 115, which acts as the Tele-AMP-histidine intermediate.

It belongs to the HINT family. As to quaternary structure, forms dimers to octamers and even larger oligomer.

The protein resides in the cytoplasm. The protein localises to the nucleus. The enzyme catalyses adenosine 5'-phosphoramidate + H2O = AMP + NH4(+). Its function is as follows. Exhibits adenosine 5'-monophosphoramidase activity, hydrolyzing purine nucleotide phosphoramidates with a single phosphate group such as adenosine 5'monophosphoramidate (AMP-NH2) to yield AMP and NH2. Hydrolyzes lysyl-AMP (AMP-N-epsilon-(N-alpha-acetyl lysine methyl ester)) generated by lysine tRNA ligase. In Xenopus tropicalis (Western clawed frog), this protein is Adenosine 5'-monophosphoramidase HINT3 (hint3).